The sequence spans 108 residues: Signal recognition particle 19 kDa protein (108 aa).

This sequence belongs to the SRP19 family. Part of the signal recognition particle protein translocation system, which is composed of SRP and FtsY. Archaeal SRP consists of a 7S RNA molecule of 300 nucleotides and two protein subunits: SRP54 and SRP19.

Its subcellular location is the cytoplasm. Functionally, involved in targeting and insertion of nascent membrane proteins into the cytoplasmic membrane. Binds directly to 7S RNA and mediates binding of the 54 kDa subunit of the SRP. The polypeptide is Signal recognition particle 19 kDa protein (Thermococcus kodakarensis (strain ATCC BAA-918 / JCM 12380 / KOD1) (Pyrococcus kodakaraensis (strain KOD1))).